The sequence spans 282 residues: Probable endonuclease 4 (282 aa).

9 residues coordinate Zn(2+): H69, H109, E145, D179, H182, H216, D229, H231, and E261.

This sequence belongs to the AP endonuclease 2 family. Zn(2+) serves as cofactor.

It catalyses the reaction Endonucleolytic cleavage to 5'-phosphooligonucleotide end-products.. Functionally, endonuclease IV plays a role in DNA repair. It cleaves phosphodiester bonds at apurinic or apyrimidinic (AP) sites, generating a 3'-hydroxyl group and a 5'-terminal sugar phosphate. The protein is Probable endonuclease 4 of Chlorobium chlorochromatii (strain CaD3).